The following is a 453-amino-acid chain: Growth/differentiation factor 9 (453 aa).

An N-terminal signal peptide occupies residues M1–P27. A propeptide spanning residues S28–R318 is cleaved from the precursor. Residues N163, N236, N255, and N269 are each glycosylated (N-linked (GlcNAc...) asparagine). Positions G304–K328 are disordered. Residues R318–K328 are compositionally biased toward basic and acidic residues. An N-linked (GlcNAc...) asparagine glycan is attached at N337. 3 disulfides stabilise this stretch: C352–C418, C381–C450, and C385–C452.

This sequence belongs to the TGF-beta family. As to quaternary structure, homodimer or heterodimer (Potential). But, in contrast to other members of this family, cannot be disulfide-linked. In terms of processing, phosphorylated; phosphorylation is critical for GDF9 function.

It localises to the secreted. In terms of biological role, required for ovarian folliculogenesis. The chain is Growth/differentiation factor 9 (GDF9) from Ovis aries (Sheep).